We begin with the raw amino-acid sequence, 116 residues long: Large ribosomal subunit protein uL18 (116 aa).

Belongs to the universal ribosomal protein uL18 family. Part of the 50S ribosomal subunit; part of the 5S rRNA/L5/L18/L25 subcomplex. Contacts the 5S and 23S rRNAs.

Its function is as follows. This is one of the proteins that bind and probably mediate the attachment of the 5S RNA into the large ribosomal subunit, where it forms part of the central protuberance. The protein is Large ribosomal subunit protein uL18 of Cellvibrio japonicus (strain Ueda107) (Pseudomonas fluorescens subsp. cellulosa).